A 428-amino-acid polypeptide reads, in one-letter code: Nematode resistance protein-like HSPRO1 (428 aa).

Interacts with SNF4.

It is found in the cytoplasm. Positive regulator of basal resistance. This is Nematode resistance protein-like HSPRO1 (HSPRO1) from Arabidopsis thaliana (Mouse-ear cress).